The chain runs to 502 residues: Nucleoside transporter 2 (502 aa).

The Cytoplasmic segment spans residues 1–30; that stretch reads MTTSSDSAMVNHTPSPWYKFGFKSFAEFNT. A helical membrane pass occupies residues 31–51; sequence YVTFVFLGMSIMMVASAVTSA. Topologically, residues 52 to 81 are extracellular; that stretch reads PDFLTRYYVYATGDPDAVAETPLFWNNANT. The chain crosses the membrane as a helical span at residues 82 to 102; it reads FYNAGTYVLQVLTELFSLTPF. Topologically, residues 103-111 are cytoplasmic; that stretch reads MRRIPLSVR. Residues 112 to 132 traverse the membrane as a helical segment; it reads LFVGLGIPFAELLLIIIVPAA. Over 133-137 the chain is Extracellular; that stretch reads TIKSQ. A helical transmembrane segment spans residues 138–158; that stretch reads HGAIAVIMVVACVGGFSKALC. The Cytoplasmic segment spans residues 159-178; sequence DSCTNALVGPFPTKFMNGAQ. Residues 179-199 form a helical membrane-spanning segment; the sequence is WGLTVIALLMSIIQIILKVSM. Topologically, residues 200–210 are extracellular; sequence GTSFHDILTMS. A helical membrane pass occupies residues 211 to 231; the sequence is RIYFGICIGIQLFAIFELAIL. Over 232–352 the chain is Cytoplasmic; the sequence is RFNPFAQKYI…SVFKRVYPML (121 aa). Positions 252 to 273 are disordered; the sequence is AQNNESTLEETAPSMNEPAAGD. The chain crosses the membrane as a helical span at residues 353–373; sequence VCVFLIYFTSLLTFPGVFFLV. Residues 374–380 lie on the Extracellular side of the membrane; sequence STTSGWY. A helical membrane pass occupies residues 381–401; the sequence is MTVIVTLFNAGDFISRMVLMF. The Cytoplasmic segment spans residues 402–408; sequence RPLRPSP. The helical transmembrane segment at 409 to 429 threads the bilayer; that stretch reads KVVVAGTLGRLIIIPFLVLCV. Topologically, residues 430–436 are extracellular; the sequence is RGIIRGE. Residues 437-457 traverse the membrane as a helical segment; the sequence is ALPYVLITLLGLTNGYFGCMA. Over 458–477 the chain is Cytoplasmic; that stretch reads CIHCPRTTTLRYAGERSLAA. A helical membrane pass occupies residues 478–498; it reads MLSGISIMLGLCFGSNLSLAI. Over 499-502 the chain is Extracellular; the sequence is TLTH.

It belongs to the SLC29A/ENT transporter (TC 2.A.57) family.

The protein resides in the cell membrane. It catalyses the reaction inosine(in) = inosine(out). The enzyme catalyses guanosine(in) = guanosine(out). In terms of biological role, high affinity transporter for inosine and guanosine. This Crithidia fasciculata protein is Nucleoside transporter 2.